We begin with the raw amino-acid sequence, 103 residues long: MQNQKIRIRLKAFDYRLIDQSAAEIVETAKRTGAIVKGPVPLPTRIQRFDVLRSPHVNKTSRDQFEIRTHQRLMDIVDPTDKTVDALMKLDLPAGVDVEIKLQ.

The protein belongs to the universal ribosomal protein uS10 family. Part of the 30S ribosomal subunit.

Its function is as follows. Involved in the binding of tRNA to the ribosomes. This is Small ribosomal subunit protein uS10 from Ralstonia pickettii (strain 12J).